We begin with the raw amino-acid sequence, 612 residues long: Elongation factor 4 (612 aa).

The 183-residue stretch at 11 to 193 (KHIRNFSIIA…RIVTDVPAPS (183 aa)) folds into the tr-type G domain. Residues 23–28 (DHGKST) and 140–143 (NKVD) contribute to the GTP site.

The protein belongs to the TRAFAC class translation factor GTPase superfamily. Classic translation factor GTPase family. LepA subfamily.

The protein localises to the cell membrane. It catalyses the reaction GTP + H2O = GDP + phosphate + H(+). Its function is as follows. Required for accurate and efficient protein synthesis under certain stress conditions. May act as a fidelity factor of the translation reaction, by catalyzing a one-codon backward translocation of tRNAs on improperly translocated ribosomes. Back-translocation proceeds from a post-translocation (POST) complex to a pre-translocation (PRE) complex, thus giving elongation factor G a second chance to translocate the tRNAs correctly. Binds to ribosomes in a GTP-dependent manner. The polypeptide is Elongation factor 4 (Lacticaseibacillus paracasei (strain ATCC 334 / BCRC 17002 / CCUG 31169 / CIP 107868 / KCTC 3260 / NRRL B-441) (Lactobacillus paracasei)).